Reading from the N-terminus, the 445-residue chain is Phosphoglucosamine mutase (445 aa).

S102 acts as the Phosphoserine intermediate in catalysis. Mg(2+)-binding residues include S102, D241, D243, and D245. A Phosphoserine modification is found at S102.

This sequence belongs to the phosphohexose mutase family. It depends on Mg(2+) as a cofactor. Post-translationally, activated by phosphorylation.

The catalysed reaction is alpha-D-glucosamine 1-phosphate = D-glucosamine 6-phosphate. In terms of biological role, catalyzes the conversion of glucosamine-6-phosphate to glucosamine-1-phosphate. This Shewanella oneidensis (strain ATCC 700550 / JCM 31522 / CIP 106686 / LMG 19005 / NCIMB 14063 / MR-1) protein is Phosphoglucosamine mutase.